Consider the following 237-residue polypeptide: MDNLKTSVHEIYLSLSGEGISTGIPTIFVRMAGCSLRCGMTVGRKLWCDTPYALSPKAGEEMSVNQVLDKIQELSAVNIQILLTGGEPLEGRNREFSITLGNEIFRIRNSSGFYPRPRVETNGAESIEGMDQFVFTLDYKLPGSGMEDRMNLKNLEIYKERKNPLDEIKFVIRDKNDFERCLEIIEKHALVGNLLASPVQGELSPEILAEWIKYSLGSGLRLSIQTHKYIWGDQRGV.

Substrate contacts are provided by residues 15-17 (LSG) and Arg-30. In terms of domain architecture, Radical SAM core spans 21–233 (STGIPTIFVR…IQTHKYIWGD (213 aa)). [4Fe-4S] cluster is bound by residues Cys-34, Cys-38, and Cys-48. Thr-50 lines the Mg(2+) pocket. Thr-84 serves as a coordination point for substrate. Gly-86 serves as a coordination point for S-adenosyl-L-methionine.

The protein belongs to the radical SAM superfamily. 7-carboxy-7-deazaguanine synthase family. As to quaternary structure, homodimer. [4Fe-4S] cluster serves as cofactor. S-adenosyl-L-methionine is required as a cofactor. The cofactor is Mg(2+).

The catalysed reaction is 6-carboxy-5,6,7,8-tetrahydropterin + H(+) = 7-carboxy-7-deazaguanine + NH4(+). Its pathway is purine metabolism; 7-cyano-7-deazaguanine biosynthesis. Catalyzes the complex heterocyclic radical-mediated conversion of 6-carboxy-5,6,7,8-tetrahydropterin (CPH4) to 7-carboxy-7-deazaguanine (CDG), a step common to the biosynthetic pathways of all 7-deazapurine-containing compounds. The chain is 7-carboxy-7-deazaguanine synthase from Leptospira interrogans serogroup Icterohaemorrhagiae serovar Lai (strain 56601).